The chain runs to 63 residues: Large ribosomal subunit protein bL35 (63 aa).

Belongs to the bacterial ribosomal protein bL35 family.

In Campylobacter jejuni subsp. doylei (strain ATCC BAA-1458 / RM4099 / 269.97), this protein is Large ribosomal subunit protein bL35.